Consider the following 63-residue polypeptide: Large ribosomal subunit protein uL30 (63 aa).

Belongs to the universal ribosomal protein uL30 family. In terms of assembly, part of the 50S ribosomal subunit.

The sequence is that of Large ribosomal subunit protein uL30 from Xylella fastidiosa (strain M23).